The primary structure comprises 1347 residues: DExH-box ATP-dependent RNA helicase DExH11 (1347 aa).

Residues 263 to 291 are disordered; sequence ELEGDDHTAGSESPKAEAEPDAKASISNE. Over residues 267-284 the composition is skewed to basic and acidic residues; sequence DDHTAGSESPKAEAEPDA. Residues 369–524 form the Helicase ATP-binding domain; the sequence is ICCLEKGESV…WIGRTKQKEI (156 aa). Residue 382 to 389 coordinates ATP; that stretch reads AHTSAGKT. Residues 472-475 carry the DEVH box motif; that stretch reads DEVH. The tract at residues 566 to 625 is disordered; the sequence is SQKKKNSNAVSVAPKQQMGSSAHQDGSKSQKHEAHSRGKQNKHSSVKDVGKSSYSGNSQN. Residues 590–601 show a composition bias toward basic and acidic residues; sequence DGSKSQKHEAHS. The Helicase C-terminal domain maps to 673–838; the sequence is DLTSSSEKSE…LTYIMILHLL (166 aa).

This sequence belongs to the DExH box helicase family. SKI2 subfamily. As to quaternary structure, component of the cytoplasmic SKI complex, which consists of SKI2, SKI3 and VIP3/SKI8. In terms of tissue distribution, expressed in vascular tissues of leaves and roots of young plants.

The protein localises to the cytoplasm. It carries out the reaction ATP + H2O = ADP + phosphate + H(+). Functionally, component of the SKI complex which is thought to be involved in exosome-mediated RNA decay and associates with transcriptionally active genes in a manner dependent on PAF1 complex (PAF1C). Involved in the regulation of potassium deprivation stress response. The protein is DExH-box ATP-dependent RNA helicase DExH11 of Arabidopsis thaliana (Mouse-ear cress).